The primary structure comprises 250 residues: Electron transport regulator A (250 aa).

An HTH crp-type domain is found at 164–237 (KNAEERLAAF…GKYIIIVDHH (74 aa)). A DNA-binding region (H-T-H motif) is located at residues 197–216 (RGDIGNYLGLTVETISRLLG).

Monomer.

In terms of biological role, regulates anaerobic growth on fumarate, nitrite, Fe(3+), TMAO, DMSO, thiosulfate and sulfite, but not on nitrate nor Mn(4+). The protein is Electron transport regulator A (etrA) of Shewanella oneidensis (strain ATCC 700550 / JCM 31522 / CIP 106686 / LMG 19005 / NCIMB 14063 / MR-1).